The primary structure comprises 503 residues: ATP-dependent RNA helicase dbp3 (503 aa).

A compositionally biased stretch (basic and acidic residues) spans 1–25 (MAKRVQHEGGDYRPQKRSKNERNGE). A disordered region spans residues 1 to 35 (MAKRVQHEGGDYRPQKRSKNERNGEGSKVSPSAEA). The short motif at 104 to 112 (SFSSPTPIQ) is the Q motif element. The Helicase ATP-binding domain maps to 116-292 (WPLLFAGRDV…ATFMTSAVTV (177 aa)). 129-136 (AETGSGKT) contacts ATP. Positions 239 to 242 (DEAD) match the DEAD box motif. A Helicase C-terminal domain is found at 307–472 (RIKQVVEVVK…DVPDALLKFG (166 aa)).

Belongs to the DEAD box helicase family. DDX5/DBP2 subfamily.

The protein localises to the nucleus. Its subcellular location is the nucleolus. The catalysed reaction is ATP + H2O = ADP + phosphate + H(+). Its function is as follows. ATP-dependent RNA helicase required for 60S ribosomal subunit synthesis. Involved in efficient pre-rRNA processing, predominantly at site A3, which is necessary for the normal formation of 25S and 5.8S rRNAs. The sequence is that of ATP-dependent RNA helicase dbp3 (dbp3) from Neosartorya fischeri (strain ATCC 1020 / DSM 3700 / CBS 544.65 / FGSC A1164 / JCM 1740 / NRRL 181 / WB 181) (Aspergillus fischerianus).